A 352-amino-acid polypeptide reads, in one-letter code: Sortase SrtE1 (352 aa).

Basic and acidic residues-rich tracts occupy residues 1–10 (MTALRPERDS) and 34–45 (RYEESAAGEENR). Residues 1 to 132 (MTALRPERDS…RQARARKPGA (132 aa)) are disordered. At 1–139 (MTALRPERDS…PGAAVVASRA (139 aa)) the chain is on the cytoplasmic side. Positions 15 to 79 (DQGSSYGQPY…TGPIGGGPDG (65 aa)) are required for protein stability. Over residues 71–82 (GPIGGGPDGGGR) the composition is skewed to gly residues. Residues 83–97 (AARRKAAKRRHGRRG) show a composition bias toward basic residues. The chain crosses the membrane as a helical span at residues 140 to 160 (IGEIFITTGVLMLLFVTYQLW). At 161-352 (WTNVRAHAQA…SKGKPDALVS (192 aa)) the chain is on the extracellular side. Catalysis depends on residues His251 and Cys320. The active-site Proton donor is the Arg329.

The protein belongs to the bacterial sortase family. Class E subfamily.

The protein resides in the cell membrane. It carries out the reaction The enzyme catalyzes a cell wall sorting reaction in which a surface protein with a sorting signal containing a LPXTG motif is cleaved between the Thr and Gly residue. The resulting threonine carboxyl end of the protein is covalently attached to a pentaglycine cross-bridge of peptidoglycan.. In terms of biological role, transpeptidase that anchors surface proteins to the cell wall. Recognizes both Leu-Ala-x-Thr-Gly and Leu-Pro-x-Thr-Gly, with a preference for the former. Unlike the S.aureus sortase it cleaves not only the Thr-Gly motif but also the Ala-X bond; Ala-Glu and Ala-His bonds are better substrates than the Thr-Gly motif in vitro. Among its possible substrates are the chaplins ChpA, ChpB and ChpC; this enzyme is less important for ChpC attachment than is SrtE2. A double knockout mutant of srtE1 and srtE2 shows a developmental defect in aerial hyphae formation more dramatic than that due to chaplin deletion. This is Sortase SrtE1 from Streptomyces coelicolor (strain ATCC BAA-471 / A3(2) / M145).